The following is a 503-amino-acid chain: AMP phosphorylase (503 aa).

Residues glycine 168, 194 to 199 (SRAITG), and serine 203 each bind AMP. Residue aspartate 256 is the Proton donor of the active site. Residues serine 264 and lysine 288 each coordinate AMP.

It belongs to the thymidine/pyrimidine-nucleoside phosphorylase family. Type 2 subfamily.

It catalyses the reaction AMP + phosphate = alpha-D-ribose 1,5-bisphosphate + adenine. The enzyme catalyses CMP + phosphate = cytosine + alpha-D-ribose 1,5-bisphosphate. The catalysed reaction is UMP + phosphate = alpha-D-ribose 1,5-bisphosphate + uracil. Functionally, catalyzes the conversion of AMP and phosphate to adenine and ribose 1,5-bisphosphate (R15P). Exhibits phosphorylase activity toward CMP and UMP in addition to AMP. Functions in an archaeal AMP degradation pathway, together with R15P isomerase and RubisCO. The protein is AMP phosphorylase of Methanocella arvoryzae (strain DSM 22066 / NBRC 105507 / MRE50).